We begin with the raw amino-acid sequence, 94 residues long: Pyrimidine/purine nucleoside phosphorylase (94 aa).

This sequence belongs to the nucleoside phosphorylase PpnP family.

It carries out the reaction a purine D-ribonucleoside + phosphate = a purine nucleobase + alpha-D-ribose 1-phosphate. The enzyme catalyses adenosine + phosphate = alpha-D-ribose 1-phosphate + adenine. The catalysed reaction is cytidine + phosphate = cytosine + alpha-D-ribose 1-phosphate. It catalyses the reaction guanosine + phosphate = alpha-D-ribose 1-phosphate + guanine. It carries out the reaction inosine + phosphate = alpha-D-ribose 1-phosphate + hypoxanthine. The enzyme catalyses thymidine + phosphate = 2-deoxy-alpha-D-ribose 1-phosphate + thymine. The catalysed reaction is uridine + phosphate = alpha-D-ribose 1-phosphate + uracil. It catalyses the reaction xanthosine + phosphate = alpha-D-ribose 1-phosphate + xanthine. Its function is as follows. Catalyzes the phosphorolysis of diverse nucleosides, yielding D-ribose 1-phosphate and the respective free bases. Can use uridine, adenosine, guanosine, cytidine, thymidine, inosine and xanthosine as substrates. Also catalyzes the reverse reactions. This is Pyrimidine/purine nucleoside phosphorylase from Vibrio campbellii (strain ATCC BAA-1116).